Reading from the N-terminus, the 82-residue chain is Large ribosomal subunit protein bL31B (82 aa).

It belongs to the bacterial ribosomal protein bL31 family. Type B subfamily. Part of the 50S ribosomal subunit.

The polypeptide is Large ribosomal subunit protein bL31B (Amoebophilus asiaticus (strain 5a2)).